The following is a 385-amino-acid chain: HAT1-interacting factor 1 (385 aa).

Residues 80 to 199 (GNLFGDALLA…RKSGFHIYFE (120 aa)) are important for interaction with heterotetrameric histone H3 and H4 and for interaction with dimeric histone H2A and H2B. 2 stretches are compositionally biased toward low complexity: residues 85 to 97 (DALL…SGSE) and 105 to 116 (DVSNGEEGNENG). The tract at residues 85–163 (DALLAGDDGS…EEENVEKEEE (79 aa)) is disordered. Acidic residues predominate over residues 129–160 (DQEEEDLTGDVDSGDSEDSGEGSEEEEENVEK). S174 carries the phosphoserine modification. TPR repeat units lie at residues 186-220 (VSQL…LGRP), 229-262 (ENSR…YLKA), and 289-322 (ALRW…RPKD). An interaction with dimeric histone H2A and H2B region spans residues 248-332 (EAEMFSRAIH…SELQQARLAQ (85 aa)). The interval 340 to 385 (VQENQQHGSKRPLSQPTTSIGFPALEKPLGDFNDLSQLVKKKPRRH) is disordered. Over residues 342–359 (ENQQHGSKRPLSQPTTSI) the composition is skewed to polar residues.

It belongs to the NASP family. As to quaternary structure, homodimer. The homodimer interacts with a histone tetramer containing H3 and H4; the interaction is direct. The homodimer interacts with heterodimeric histone H2A and H2B; the interaction is direct. Component of the nuclear histone acetyltransferase B (HAT-B) complex composed of at least HAT1, HAT2 and HIF1. Does not interact with HAT1 in the absence of HAT2. Interacts with histones H3 and H4 in a HAT1/HAT2 dependent manner. Interaction with heterotetrameric histone H3 and H4 precludes interaction with dimeric histone H2A and H2B, irrespective of the fact that their binding involves non-identical regions of the protein.

It is found in the nucleus. Functionally, histone H3 and H4 specific chaperone component of the nuclear histone acetyltransferase B (HAT-B) complex. Involved in chromatin assembly and telomere silencing. In Saccharomyces cerevisiae (strain ATCC 204508 / S288c) (Baker's yeast), this protein is HAT1-interacting factor 1 (HIF1).